Reading from the N-terminus, the 360-residue chain is Peptide chain release factor 1 (360 aa).

Gln235 carries the post-translational modification N5-methylglutamine. Positions 284 to 303 (RERQSKEAAERKSLVGSGDR) are disordered.

Belongs to the prokaryotic/mitochondrial release factor family. Post-translationally, methylated by PrmC. Methylation increases the termination efficiency of RF1.

It is found in the cytoplasm. Functionally, peptide chain release factor 1 directs the termination of translation in response to the peptide chain termination codons UAG and UAA. The sequence is that of Peptide chain release factor 1 from Bordetella avium (strain 197N).